We begin with the raw amino-acid sequence, 906 residues long: Protein translocase subunit SecA (906 aa).

Residues Gln89, 107–111 (GEGKT), and Asp502 each bind ATP. Residues Cys885, Cys887, Cys896, and His897 each contribute to the Zn(2+) site.

This sequence belongs to the SecA family. In terms of assembly, monomer and homodimer. Part of the essential Sec protein translocation apparatus which comprises SecA, SecYEG and auxiliary proteins SecDF-YajC and YidC. Requires Zn(2+) as cofactor.

It localises to the cell inner membrane. The protein resides in the cytoplasm. It catalyses the reaction ATP + H2O + cellular proteinSide 1 = ADP + phosphate + cellular proteinSide 2.. In terms of biological role, part of the Sec protein translocase complex. Interacts with the SecYEG preprotein conducting channel. Has a central role in coupling the hydrolysis of ATP to the transfer of proteins into and across the cell membrane, serving both as a receptor for the preprotein-SecB complex and as an ATP-driven molecular motor driving the stepwise translocation of polypeptide chains across the membrane. This is Protein translocase subunit SecA from Rhizobium rhizogenes (strain K84 / ATCC BAA-868) (Agrobacterium radiobacter).